Here is a 215-residue protein sequence, read N- to C-terminus: Large ribosomal subunit protein uL4 (215 aa).

The disordered stretch occupies residues 46 to 72; sequence TAKSKNRAEVSGGGRKPWAQKGGGRAR. A compositionally biased stretch (gly residues) spans 56–71; that stretch reads SGGGRKPWAQKGGGRA.

Belongs to the universal ribosomal protein uL4 family. As to quaternary structure, part of the 50S ribosomal subunit.

Its function is as follows. One of the primary rRNA binding proteins, this protein initially binds near the 5'-end of the 23S rRNA. It is important during the early stages of 50S assembly. It makes multiple contacts with different domains of the 23S rRNA in the assembled 50S subunit and ribosome. In terms of biological role, forms part of the polypeptide exit tunnel. This Helicobacter pylori (strain Shi470) protein is Large ribosomal subunit protein uL4.